A 144-amino-acid chain; its full sequence is Cytochrome c oxidase subunit 4 isoform 1, mitochondrial (144 aa).

Over S1 to N73 the chain is Mitochondrial matrix. An N6-acetyllysine; alternate modification is found at K4. The residue at position 4 (K4) is an N6-succinyllysine; alternate. K28 carries the post-translational modification N6-acetyllysine. Phosphoserine is present on residues S31 and S33. N6-acetyllysine; alternate is present on K35. Residue K35 is modified to N6-succinyllysine; alternate. K42 is subject to N6-acetyllysine. A helical membrane pass occupies residues E74 to Y99. Residues V100–K144 are Mitochondrial intermembrane-facing.

It belongs to the cytochrome c oxidase IV family. Component of the cytochrome c oxidase (complex IV, CIV), a multisubunit enzyme composed of 14 subunits. The complex is composed of a catalytic core of 3 subunits MT-CO1, MT-CO2 and MT-CO3, encoded in the mitochondrial DNA, and 11 supernumerary subunits COX4I, COX5A, COX5B, COX6A, COX6B, COX6C, COX7A, COX7B, COX7C, COX8 and NDUFA4, which are encoded in the nuclear genome. The complex exists as a monomer or a dimer and forms supercomplexes (SCs) in the inner mitochondrial membrane with NADH-ubiquinone oxidoreductase (complex I, CI) and ubiquinol-cytochrome c oxidoreductase (cytochrome b-c1 complex, complex III, CIII), resulting in different assemblies (supercomplex SCI(1)III(2)IV(1) and megacomplex MCI(2)III(2)IV(2)). Interacts with PHB2; the interaction decreases in absence of SPHK2. Interacts with AFG1L. Interacts with ABCB7; this interaction allows the regulation of cellular iron homeostasis and cellular reactive oxygen species (ROS) levels in cardiomyocytes. Interacts with FLVCR2; this interaction occurs in the absence of heme and is disrupted upon heme binding. Interacts with IRGC.

It is found in the mitochondrion inner membrane. Its pathway is energy metabolism; oxidative phosphorylation. Component of the cytochrome c oxidase, the last enzyme in the mitochondrial electron transport chain which drives oxidative phosphorylation. The respiratory chain contains 3 multisubunit complexes succinate dehydrogenase (complex II, CII), ubiquinol-cytochrome c oxidoreductase (cytochrome b-c1 complex, complex III, CIII) and cytochrome c oxidase (complex IV, CIV), that cooperate to transfer electrons derived from NADH and succinate to molecular oxygen, creating an electrochemical gradient over the inner membrane that drives transmembrane transport and the ATP synthase. Cytochrome c oxidase is the component of the respiratory chain that catalyzes the reduction of oxygen to water. Electrons originating from reduced cytochrome c in the intermembrane space (IMS) are transferred via the dinuclear copper A center (CU(A)) of subunit 2 and heme A of subunit 1 to the active site in subunit 1, a binuclear center (BNC) formed by heme A3 and copper B (CU(B)). The BNC reduces molecular oxygen to 2 water molecules using 4 electrons from cytochrome c in the IMS and 4 protons from the mitochondrial matrix. In Theropithecus gelada (Gelada baboon), this protein is Cytochrome c oxidase subunit 4 isoform 1, mitochondrial (COX4I1).